Consider the following 455-residue polypeptide: tRNA modification GTPase MnmE (455 aa).

Arg-24, Glu-81, and Lys-120 together coordinate (6S)-5-formyl-5,6,7,8-tetrahydrofolate. A TrmE-type G domain is found at 216-378 (GMTVVIAGRP…LREHLKHCMG (163 aa)). Asn-226 contributes to the K(+) binding site. Residues 226 to 231 (NAGKSS), 245 to 251 (TDIAGTT), 270 to 273 (DTAG), and 335 to 338 (NKAD) contribute to the GTP site. Ser-230 is a Mg(2+) binding site. The K(+) site is built by Thr-245, Ile-247, and Thr-250. Thr-251 serves as a coordination point for Mg(2+). Lys-455 serves as a coordination point for (6S)-5-formyl-5,6,7,8-tetrahydrofolate.

It belongs to the TRAFAC class TrmE-Era-EngA-EngB-Septin-like GTPase superfamily. TrmE GTPase family. In terms of assembly, homodimer. Heterotetramer of two MnmE and two MnmG subunits. K(+) serves as cofactor.

It localises to the cytoplasm. Exhibits a very high intrinsic GTPase hydrolysis rate. Involved in the addition of a carboxymethylaminomethyl (cmnm) group at the wobble position (U34) of certain tRNAs, forming tRNA-cmnm(5)s(2)U34. The protein is tRNA modification GTPase MnmE of Stutzerimonas stutzeri (strain A1501) (Pseudomonas stutzeri).